The primary structure comprises 584 residues: 2-succinyl-5-enolpyruvyl-6-hydroxy-3-cyclohexene-1-carboxylate synthase (584 aa).

Belongs to the TPP enzyme family. MenD subfamily. Homodimer. It depends on Mg(2+) as a cofactor. Requires Mn(2+) as cofactor. The cofactor is thiamine diphosphate.

The enzyme catalyses isochorismate + 2-oxoglutarate + H(+) = 5-enolpyruvoyl-6-hydroxy-2-succinyl-cyclohex-3-ene-1-carboxylate + CO2. The protein operates within quinol/quinone metabolism; 1,4-dihydroxy-2-naphthoate biosynthesis; 1,4-dihydroxy-2-naphthoate from chorismate: step 2/7. It functions in the pathway quinol/quinone metabolism; menaquinone biosynthesis. In terms of biological role, catalyzes the thiamine diphosphate-dependent decarboxylation of 2-oxoglutarate and the subsequent addition of the resulting succinic semialdehyde-thiamine pyrophosphate anion to isochorismate to yield 2-succinyl-5-enolpyruvyl-6-hydroxy-3-cyclohexene-1-carboxylate (SEPHCHC). The sequence is that of 2-succinyl-5-enolpyruvyl-6-hydroxy-3-cyclohexene-1-carboxylate synthase from Bacillus thuringiensis subsp. konkukian (strain 97-27).